A 99-amino-acid polypeptide reads, in one-letter code: Nucleoid-associated protein LACR_0106 (99 aa).

This sequence belongs to the YbaB/EbfC family. As to quaternary structure, homodimer.

It is found in the cytoplasm. It localises to the nucleoid. Its function is as follows. Binds to DNA and alters its conformation. May be involved in regulation of gene expression, nucleoid organization and DNA protection. The chain is Nucleoid-associated protein LACR_0106 from Lactococcus lactis subsp. cremoris (strain SK11).